Here is a 576-residue protein sequence, read N- to C-terminus: Flagellin B (576 aa).

This sequence belongs to the bacterial flagellin family. Heteromer of FlaA and FlaB. Interacts with FliW. Interacts with FliS.

It is found in the secreted. The protein resides in the bacterial flagellum. Functionally, flagellin is the subunit protein which polymerizes to form the filaments of bacterial flagella. The polypeptide is Flagellin B (flaB) (Campylobacter jejuni subsp. jejuni serotype O:6 (strain 81116 / NCTC 11828)).